A 239-amino-acid chain; its full sequence is 1-(5-phosphoribosyl)-5-[(5-phosphoribosylamino)methylideneamino] imidazole-4-carboxamide isomerase (239 aa).

Asp-8 serves as the catalytic Proton acceptor. Catalysis depends on Asp-129, which acts as the Proton donor.

Belongs to the HisA/HisF family.

The protein localises to the cytoplasm. It carries out the reaction 1-(5-phospho-beta-D-ribosyl)-5-[(5-phospho-beta-D-ribosylamino)methylideneamino]imidazole-4-carboxamide = 5-[(5-phospho-1-deoxy-D-ribulos-1-ylimino)methylamino]-1-(5-phospho-beta-D-ribosyl)imidazole-4-carboxamide. It participates in amino-acid biosynthesis; L-histidine biosynthesis; L-histidine from 5-phospho-alpha-D-ribose 1-diphosphate: step 4/9. The polypeptide is 1-(5-phosphoribosyl)-5-[(5-phosphoribosylamino)methylideneamino] imidazole-4-carboxamide isomerase (Cereibacter sphaeroides (strain ATCC 17029 / ATH 2.4.9) (Rhodobacter sphaeroides)).